Here is a 303-residue protein sequence, read N- to C-terminus: MITIFNKLKQSLSKTSNTISAGIDKIFYKRKLDKETLNELEELLISSDISISVVTHIIEEFKNVKFDKTIDSDTVKEAIAKLIEQQLSKSEIPFTLSENKLNIILVCGVNGVGKTTTIGKLSALYSAEGKKVAVAACDTFRAAAINQLSSWVHRANALLITGKASADPASVAYRAIEESIKQNIDILFIDTAGRLHNNKNLMDELSKIVKVIKKLDENAPTHSILIIDAITGQNTYNQIEYFNDVTNLTGLIVTKLDGSAKAGVLVGAVQKFNLPVYFIGIGEKIEDLKIFNRHDFSRSLVGL.

Residues 108 to 115 (GVNGVGKT), 190 to 194 (DTAGR), and 254 to 257 (TKLD) each bind GTP.

It belongs to the GTP-binding SRP family. FtsY subfamily. Part of the signal recognition particle protein translocation system, which is composed of SRP and FtsY. SRP is a ribonucleoprotein composed of Ffh and a 4.5S RNA molecule.

Its subcellular location is the cell inner membrane. The protein resides in the cytoplasm. The enzyme catalyses GTP + H2O = GDP + phosphate + H(+). Its function is as follows. Involved in targeting and insertion of nascent membrane proteins into the cytoplasmic membrane. Acts as a receptor for the complex formed by the signal recognition particle (SRP) and the ribosome-nascent chain (RNC). Interaction with SRP-RNC leads to the transfer of the RNC complex to the Sec translocase for insertion into the membrane, the hydrolysis of GTP by both Ffh and FtsY, and the dissociation of the SRP-FtsY complex into the individual components. This is Signal recognition particle receptor FtsY from Rickettsia prowazekii (strain Madrid E).